The following is a 205-amino-acid chain: Guanylate kinase (205 aa).

The Guanylate kinase-like domain occupies 7–185 (GNIFIISAAS…AEGDLLHIVN (179 aa)). 14–21 (AASGTGKT) provides a ligand contact to ATP.

The protein belongs to the guanylate kinase family.

The protein resides in the cytoplasm. It carries out the reaction GMP + ATP = GDP + ADP. In terms of biological role, essential for recycling GMP and indirectly, cGMP. The sequence is that of Guanylate kinase from Neisseria gonorrhoeae (strain ATCC 700825 / FA 1090).